The sequence spans 320 residues: N-acetylneuraminate lyase (320 aa).

Aceneuramate contacts are provided by Thr-51 and Thr-52. Tyr-143 acts as the Proton donor in catalysis. Lys-173 (schiff-base intermediate with substrate) is an active-site residue. Thr-175, Gly-199, Asp-201, Glu-202, and Ser-218 together coordinate aceneuramate. Ser-308 is subject to Phosphoserine.

The protein belongs to the DapA family. NanA subfamily. Homotetramer.

The protein resides in the cytoplasm. It carries out the reaction aceneuramate = aldehydo-N-acetyl-D-mannosamine + pyruvate. It functions in the pathway amino-sugar metabolism; N-acetylneuraminate degradation. Functionally, catalyzes the cleavage of N-acetylneuraminic acid (sialic acid) to form pyruvate and N-acetylmannosamine via a Schiff base intermediate. It prevents sialic acids from being recycled and returning to the cell surface. Involved in the N-glycolylneuraminic acid (Neu5Gc) degradation pathway. In Mus musculus (Mouse), this protein is N-acetylneuraminate lyase.